The following is a 142-amino-acid chain: Large ribosomal subunit protein uL13 (142 aa).

Belongs to the universal ribosomal protein uL13 family. Part of the 50S ribosomal subunit.

In terms of biological role, this protein is one of the early assembly proteins of the 50S ribosomal subunit, although it is not seen to bind rRNA by itself. It is important during the early stages of 50S assembly. This Herminiimonas arsenicoxydans protein is Large ribosomal subunit protein uL13.